Reading from the N-terminus, the 657-residue chain is Pentatricopeptide repeat-containing protein At2g37310 (657 aa).

PPR repeat units lie at residues 21-55, 56-86, 87-121, 128-165, 166-196, 197-232, 233-267, 268-298, 299-333, 334-364, 365-399, 400-430, 431-465, 466-501, and 502-536; these read DGGA…SIKP, DNFL…ITVR, NAFS…SCYS, DSIS…GFDS, DVFV…MSER, DVVS…DFKP, NGVT…HIQM, DLSL…MSEK, DSVT…GLST, WNAM…GSRP, NTVT…GADN, NIYV…CKDR, SLIA…GTKP, DDVT…DIEP, and GVEH…PIAK. The segment at 537-612 is type E motif; sequence VWGALLNGAS…IPGTSWIETE (76 aa). A type E(+) motif region spans residues 613-643; the sequence is KGLRSFIAKDSSCERSKEMYEIIEGLVESMS.

The protein belongs to the PPR family. PCMP-E subfamily.

The sequence is that of Pentatricopeptide repeat-containing protein At2g37310 (PCMP-E49) from Arabidopsis thaliana (Mouse-ear cress).